The sequence spans 876 residues: Alanine--tRNA ligase (876 aa).

Position 74 is an N6-acetyllysine (K74). Residues H564, H568, C666, and H670 each contribute to the Zn(2+) site.

This sequence belongs to the class-II aminoacyl-tRNA synthetase family. In terms of assembly, homotetramer. Zn(2+) is required as a cofactor.

The protein localises to the cytoplasm. It catalyses the reaction tRNA(Ala) + L-alanine + ATP = L-alanyl-tRNA(Ala) + AMP + diphosphate. Functionally, catalyzes the attachment of alanine to tRNA(Ala) in a two-step reaction: alanine is first activated by ATP to form Ala-AMP and then transferred to the acceptor end of tRNA(Ala). Also edits incorrectly charged Ser-tRNA(Ala) and Gly-tRNA(Ala) via its editing domain. The polypeptide is Alanine--tRNA ligase (Escherichia coli O157:H7).